The primary structure comprises 102 residues: Small ribosomal subunit protein uS10 (102 aa).

Belongs to the universal ribosomal protein uS10 family. In terms of assembly, part of the 30S ribosomal subunit.

Involved in the binding of tRNA to the ribosomes. This chain is Small ribosomal subunit protein uS10, found in Dehalococcoides mccartyi (strain ATCC BAA-2100 / JCM 16839 / KCTC 5957 / BAV1).